The chain runs to 69 residues: Cytochrome c oxidase subunit 8A, mitochondrial (69 aa).

The transit peptide at 1–25 (MSVLTPLLLRGLAGSARRLPVPRAQ) directs the protein to the mitochondrion. Positions 2–19 (SVLTPLLLRGLAGSARRL) match the SIFI-degron motif. Residues 26–36 (IHSKPPREQLG) lie on the Mitochondrial matrix side of the membrane. Residues 37 to 60 (TMDVAIGITSCFLCFLLPAGWVLS) traverse the membrane as a helical segment. Residues 61-69 (HLESYKKRE) are Mitochondrial intermembrane-facing.

It belongs to the cytochrome c oxidase VIII family. As to quaternary structure, component of the cytochrome c oxidase (complex IV, CIV), a multisubunit enzyme composed of 14 subunits. The complex is composed of a catalytic core of 3 subunits MT-CO1, MT-CO2 and MT-CO3, encoded in the mitochondrial DNA, and 11 supernumerary subunits COX4I, COX5A, COX5B, COX6A, COX6B, COX6C, COX7A, COX7B, COX7C, COX8 and NDUFA4, which are encoded in the nuclear genome. The complex exists as a monomer or a dimer and forms supercomplexes (SCs) in the inner mitochondrial membrane with NADH-ubiquinone oxidoreductase (complex I, CI) and ubiquinol-cytochrome c oxidoreductase (cytochrome b-c1 complex, complex III, CIII), resulting in different assemblies (supercomplex SCI(1)III(2)IV(1) and megacomplex MCI(2)III(2)IV(2)). In response to mitochondrial stress, the precursor protein is ubiquitinated by the SIFI complex in the cytoplasm before mitochondrial import, leading to its degradation. Within the SIFI complex, UBR4 initiates ubiquitin chain that are further elongated or branched by KCMF1.

It localises to the mitochondrion inner membrane. The protein operates within energy metabolism; oxidative phosphorylation. In terms of biological role, component of the cytochrome c oxidase, the last enzyme in the mitochondrial electron transport chain which drives oxidative phosphorylation. The respiratory chain contains 3 multisubunit complexes succinate dehydrogenase (complex II, CII), ubiquinol-cytochrome c oxidoreductase (cytochrome b-c1 complex, complex III, CIII) and cytochrome c oxidase (complex IV, CIV), that cooperate to transfer electrons derived from NADH and succinate to molecular oxygen, creating an electrochemical gradient over the inner membrane that drives transmembrane transport and the ATP synthase. Cytochrome c oxidase is the component of the respiratory chain that catalyzes the reduction of oxygen to water. Electrons originating from reduced cytochrome c in the intermembrane space (IMS) are transferred via the dinuclear copper A center (CU(A)) of subunit 2 and heme A of subunit 1 to the active site in subunit 1, a binuclear center (BNC) formed by heme A3 and copper B (CU(B)). The BNC reduces molecular oxygen to 2 water molecules using 4 electrons from cytochrome c in the IMS and 4 protons from the mitochondrial matrix. The protein is Cytochrome c oxidase subunit 8A, mitochondrial (COX8A) of Carlito syrichta (Philippine tarsier).